A 58-amino-acid chain; its full sequence is Large ribosomal subunit protein bL32c (58 aa).

The protein belongs to the bacterial ribosomal protein bL32 family.

It localises to the plastid. The protein resides in the chloroplast. The protein is Large ribosomal subunit protein bL32c of Chaetosphaeridium globosum (Charophycean green alga).